We begin with the raw amino-acid sequence, 434 residues long: UDP-N-acetylglucosamine 1-carboxyvinyltransferase (434 aa).

22 to 23 (KN) lines the phosphoenolpyruvate pocket. R97 is a binding site for UDP-N-acetyl-alpha-D-glucosamine. Residue D121 is the Proton donor of the active site. Residues D319 and M341 each coordinate UDP-N-acetyl-alpha-D-glucosamine.

This sequence belongs to the EPSP synthase family. MurA subfamily.

The protein resides in the cytoplasm. The catalysed reaction is phosphoenolpyruvate + UDP-N-acetyl-alpha-D-glucosamine = UDP-N-acetyl-3-O-(1-carboxyvinyl)-alpha-D-glucosamine + phosphate. Its pathway is cell wall biogenesis; peptidoglycan biosynthesis. Its function is as follows. Cell wall formation. Adds enolpyruvyl to UDP-N-acetylglucosamine. This Bacteroides fragilis (strain ATCC 25285 / DSM 2151 / CCUG 4856 / JCM 11019 / LMG 10263 / NCTC 9343 / Onslow / VPI 2553 / EN-2) protein is UDP-N-acetylglucosamine 1-carboxyvinyltransferase.